The sequence spans 543 residues: Putative inorganic phosphate export protein YjbB (543 aa).

Transmembrane regions (helical) follow at residues 1-21 (MLTLLHLLSAVALLVWGTHIV), 48-68 (FCAGIGVTALVQSSNATTMLV), 76-96 (LVALAPALVIVLGADVGTALM), 99-119 (ILTFDLSWLSPLLIFIGVIFF), 134-154 (GIGLGLILLALELIVQAVTPI), 175-195 (ALIGAMFAIISYSSLAAVLLT), 196-216 (ATLTAAGIISFPVALCLVIGA), 240-260 (LGSLLFKLVGSLIILPFVHLL), and 274-294 (LVIYFHVFYNLVRCLVMLPFV).

This sequence belongs to the YjbB family.

Its subcellular location is the cell inner membrane. The enzyme catalyses phosphate(in) = phosphate(out). Functionally, might be involved in phosphate export. Overproduction of YjbB reduces the elevated levels of polyphosphate (polyP) in a phoU mutant that accumulates 1000-fold higher levels of polyP than the wild type, suggesting that YjbB exports excess intracellular phosphate (Pi) in the phoU mutant and thus reduces the levels of polyP. This Escherichia coli (strain K12) protein is Putative inorganic phosphate export protein YjbB (yjbB).